A 289-amino-acid polypeptide reads, in one-letter code: Serine/threonine-protein phosphatase Pgam5, mitochondrial (289 aa).

Belongs to the phosphoglycerate mutase family. BPG-dependent PGAM subfamily. As to quaternary structure, interacts with Pk92B/ASK1.

It is found in the mitochondrion outer membrane. The catalysed reaction is O-phospho-L-seryl-[protein] + H2O = L-seryl-[protein] + phosphate. The enzyme catalyses O-phospho-L-threonyl-[protein] + H2O = L-threonyl-[protein] + phosphate. Its function is as follows. Displays phosphatase activity for serine/threonine residues, and dephosphorylates and activates Pk92B kinase. Has apparently no phosphoglycerate mutase activity. This chain is Serine/threonine-protein phosphatase Pgam5, mitochondrial, found in Drosophila mojavensis (Fruit fly).